Consider the following 257-residue polypeptide: Hydroxyacylglutathione hydrolase (257 aa).

Residues His54, His56, Asp58, His59, His113, Asp137, and His175 each contribute to the Zn(2+) site.

Belongs to the metallo-beta-lactamase superfamily. Glyoxalase II family. As to quaternary structure, monomer. Requires Zn(2+) as cofactor.

The enzyme catalyses an S-(2-hydroxyacyl)glutathione + H2O = a 2-hydroxy carboxylate + glutathione + H(+). It participates in secondary metabolite metabolism; methylglyoxal degradation; (R)-lactate from methylglyoxal: step 2/2. Thiolesterase that catalyzes the hydrolysis of S-D-lactoyl-glutathione to form glutathione and D-lactic acid. This Synechocystis sp. (strain ATCC 27184 / PCC 6803 / Kazusa) protein is Hydroxyacylglutathione hydrolase.